The chain runs to 69 residues: Iota-conotoxin LtIIIA (69 aa).

Positions 1–20 (MLKMGVLLFTFLVLFPLTTL) are cleaved as a signal peptide. Residues 21-52 (ELDTDRPVERHAAIKQDLKPQERRGIRLHAPR) constitute a propeptide that is removed on maturation. Glu54 and Glu57 each carry 4-carboxyglutamate. 3 disulfide bridges follow: Cys55-Cys67, Cys56-Cys65, and Cys61-Cys68. A 4-hydroxyproline modification is found at Pro58.

As to expression, expressed by the venom duct.

It is found in the secreted. Iota-conotoxins bind to voltage-gated sodium channels and act as agonists by shifting the voltage-dependence of activation to more hyperpolarized levels. This toxin enhances tetrodotoxin-sensitive sodium current in rat dorsal root ganglion neurons. This is Iota-conotoxin LtIIIA from Conus litteratus (Lettered cone).